The sequence spans 767 residues: ABC transporter B family member 4 (767 aa).

The tract at residues N81–N104 is disordered. 5 consecutive transmembrane segments (helical) span residues I208–I228, A252–V272, V324–I344, L350–L370, and I429–W449. Positions F211–S491 constitute an ABC transmembrane type-1 domain. Positions I524–R760 constitute an ABC transporter domain. G559 to S566 provides a ligand contact to ATP.

Belongs to the ABC transporter superfamily. ABCB family. Multidrug resistance exporter (TC 3.A.1.201) subfamily.

The protein resides in the membrane. The sequence is that of ABC transporter B family member 4 (abcB4) from Dictyostelium discoideum (Social amoeba).